We begin with the raw amino-acid sequence, 601 residues long: Elongation factor 4 (601 aa).

Positions 5 to 187 (EHIRNFSIIA…AIVERLPAPE (183 aa)) constitute a tr-type G domain. Residues 17 to 22 (DHGKST) and 134 to 137 (NKVD) contribute to the GTP site.

Belongs to the TRAFAC class translation factor GTPase superfamily. Classic translation factor GTPase family. LepA subfamily.

Its subcellular location is the cell inner membrane. The enzyme catalyses GTP + H2O = GDP + phosphate + H(+). Required for accurate and efficient protein synthesis under certain stress conditions. May act as a fidelity factor of the translation reaction, by catalyzing a one-codon backward translocation of tRNAs on improperly translocated ribosomes. Back-translocation proceeds from a post-translocation (POST) complex to a pre-translocation (PRE) complex, thus giving elongation factor G a second chance to translocate the tRNAs correctly. Binds to ribosomes in a GTP-dependent manner. This chain is Elongation factor 4, found in Nitratidesulfovibrio vulgaris (strain DSM 19637 / Miyazaki F) (Desulfovibrio vulgaris).